The following is a 462-amino-acid chain: Gamma-aminobutyric acid receptor subunit alpha-5 (462 aa).

The first 31 residues, 1-31 (MDNGMFSGFIMIKNLLLFCISMNLSSHFGFS), serve as a signal peptide directing secretion. At 32–260 (QMPTSSVKDE…FHLKRKIGYF (229 aa)) the chain is on the extracellular side. Asn45 carries an N-linked (GlcNAc...) asparagine glycan. Arg101 contacts 4-aminobutanoate. Asn145 carries an N-linked (GlcNAc...) asparagine glycan. Thr164 is a binding site for 4-aminobutanoate. Cys173 and Cys187 are oxidised to a cystine. 2 N-linked (GlcNAc...) asparagine glycosylation sites follow: Asn207 and Asn236. A helical membrane pass occupies residues 261–281 (VIQTYLPCIMTVILSQVSFWL). Topologically, residues 282 to 286 (NRESV) are cytoplasmic. Residues 287-308 (PARTVFGVTTVLTMTTLSISAR) form a helical membrane-spanning segment. Residues 309 to 318 (NSLPKVAYAT) lie on the Extracellular side of the membrane. Residues 319–340 (AMDWFIAVCYAFVFSALIEFAT) traverse the membrane as a helical segment. The Cytoplasmic portion of the chain corresponds to 341 to 427 (VNYFTKRGWA…TYNSISKIDK (87 aa)). Residue Lys355 forms a Glycyl lysine isopeptide (Lys-Gly) (interchain with G-Cter in ubiquitin) linkage. Residues 377–412 (FTTGKMSHPPNIPKEQTPAGTSNTTSVSVKPSEEKT) are disordered. A helical membrane pass occupies residues 428–448 (MSRIVFPVLFGTFNLVYWATY). Residues 449–462 (LNREPVIKGAASPK) lie on the Extracellular side of the membrane.

Belongs to the ligand-gated ion channel (TC 1.A.9) family. Gamma-aminobutyric acid receptor (TC 1.A.9.5) subfamily. GABRA5 sub-subfamily. Heteropentamer, formed by a combination of alpha (GABRA1-6), beta (GABRB1-3), gamma (GABRG1-3), delta (GABRD), epsilon (GABRE), rho (GABRR1-3), pi (GABRP) and theta (GABRQ) chains, each subunit exhibiting distinct physiological and pharmacological properties.

It is found in the postsynaptic cell membrane. The protein resides in the cell membrane. The enzyme catalyses chloride(in) = chloride(out). In terms of biological role, alpha subunit of the heteropentameric ligand-gated chloride channel gated by gamma-aminobutyric acid (GABA), a major inhibitory neurotransmitter in the brain. GABA-gated chloride channels, also named GABA(A) receptors (GABAAR), consist of five subunits arranged around a central pore and contain GABA active binding site(s) located at the alpha and beta subunit interface(s). When activated by GABA, GABAARs selectively allow the flow of chloride anions across the cell membrane down their electrochemical gradient. GABAARs containing alpha-5/GABRA5 subunits are mainly extrasynaptic and contribute to the tonic GABAergic inhibition in the hippocampus. Extrasynaptic alpha-5-containing GABAARs in CA1 pyramidal neurons play a role in learning and memory processes. The polypeptide is Gamma-aminobutyric acid receptor subunit alpha-5 (Homo sapiens (Human)).